The sequence spans 642 residues: Threonine--tRNA ligase (642 aa).

Residues 1–61 (MPVITLPDGS…ESDAQLAIIT (61 aa)) form the TGS domain. Positions 243–534 (DHRKIGKQLD…LTEEYAGFYP (292 aa)) are catalytic. The Zn(2+) site is built by Cys334, His385, and His511.

The protein belongs to the class-II aminoacyl-tRNA synthetase family. In terms of assembly, homodimer. It depends on Zn(2+) as a cofactor.

It localises to the cytoplasm. It carries out the reaction tRNA(Thr) + L-threonine + ATP = L-threonyl-tRNA(Thr) + AMP + diphosphate + H(+). Catalyzes the attachment of threonine to tRNA(Thr) in a two-step reaction: L-threonine is first activated by ATP to form Thr-AMP and then transferred to the acceptor end of tRNA(Thr). Also edits incorrectly charged L-seryl-tRNA(Thr). This Serratia proteamaculans (strain 568) protein is Threonine--tRNA ligase.